The primary structure comprises 334 residues: tRNA-dihydrouridine(20/20a) synthase (334 aa).

FMN contacts are provided by residues 18–20 (PMM) and Gln71. Cys101 functions as the Proton donor in the catalytic mechanism. FMN-binding positions include Lys140, His172, 212 to 214 (NGG), and 234 to 235 (GR).

The protein belongs to the Dus family. DusA subfamily. The cofactor is FMN.

It catalyses the reaction 5,6-dihydrouridine(20) in tRNA + NADP(+) = uridine(20) in tRNA + NADPH + H(+). The catalysed reaction is 5,6-dihydrouridine(20) in tRNA + NAD(+) = uridine(20) in tRNA + NADH + H(+). It carries out the reaction 5,6-dihydrouridine(20a) in tRNA + NADP(+) = uridine(20a) in tRNA + NADPH + H(+). The enzyme catalyses 5,6-dihydrouridine(20a) in tRNA + NAD(+) = uridine(20a) in tRNA + NADH + H(+). Catalyzes the synthesis of 5,6-dihydrouridine (D), a modified base found in the D-loop of most tRNAs, via the reduction of the C5-C6 double bond in target uridines. Specifically modifies U20 and U20a in tRNAs. The protein is tRNA-dihydrouridine(20/20a) synthase of Xanthomonas axonopodis pv. citri (strain 306).